Reading from the N-terminus, the 485-residue chain is Probable carboxypeptidase S-like 1 (485 aa).

The signal sequence occupies residues 1-21; the sequence is MIFKFFFIFFLIILVIKISES. H111 provides a ligand contact to Zn(2+). Residue D113 is part of the active site. Position 142 (D142) interacts with Zn(2+). The active-site Proton acceptor is the E177. E178, D204, and H431 together coordinate Zn(2+).

It belongs to the peptidase M20A family. Requires Zn(2+) as cofactor.

The protein resides in the secreted. In Dictyostelium discoideum (Social amoeba), this protein is Probable carboxypeptidase S-like 1.